Here is a 177-residue protein sequence, read N- to C-terminus: Dihydrofolate reductase (177 aa).

The catalysed reaction is (6S)-5,6,7,8-tetrahydrofolate + NADP(+) = 7,8-dihydrofolate + NADPH + H(+). Functionally, provides the tetrahydrofolates necessary for the synthesis of nucleotides and amino acids. Bacteriophage T5 induces high levels of dihydrofolate reductase in the host cell, probably for the viral replication. The protein is Dihydrofolate reductase of Escherichia phage T5 (Enterobacteria phage T5).